A 229-amino-acid polypeptide reads, in one-letter code: Uracil-DNA glycosylase (229 aa).

The active-site Proton acceptor is the aspartate 70.

The protein belongs to the uracil-DNA glycosylase (UDG) superfamily. UNG family.

It is found in the cytoplasm. It carries out the reaction Hydrolyzes single-stranded DNA or mismatched double-stranded DNA and polynucleotides, releasing free uracil.. In terms of biological role, excises uracil residues from the DNA which can arise as a result of misincorporation of dUMP residues by DNA polymerase or due to deamination of cytosine. The polypeptide is Uracil-DNA glycosylase (Chlamydia felis (strain Fe/C-56) (Chlamydophila felis)).